A 61-amino-acid chain; its full sequence is Large ribosomal subunit protein bL32c (61 aa).

Positions 37–61 (SRSFSSGNEHPKPKGFSGQQQQTNK) are disordered.

This sequence belongs to the bacterial ribosomal protein bL32 family.

The protein localises to the plastid. It localises to the chloroplast. This is Large ribosomal subunit protein bL32c from Agrostis stolonifera (Creeping bentgrass).